Here is a 527-residue protein sequence, read N- to C-terminus: Cyclin-L1 (527 aa).

The interval 1 to 37 (MASGPHPTSTAAAASASSAAPSAGGSSSGTTTTTTTT) is disordered. Cyclin-like regions lie at residues 89–191 (ELIQ…RVLK) and 204–288 (KIIV…ETLR). Position 326 is a phosphothreonine (T326). The interval 327 to 527 (PALSTLGGFS…SRSGHGRHRR (201 aa)) is disordered. S336 and S339 each carry phosphoserine. Glycyl lysine isopeptide (Lys-Gly) (interchain with G-Cter in SUMO2) cross-links involve residues K340 and K348. Basic and acidic residues predominate over residues 343-353 (SPREVKAEEKS). 2 positions are modified to phosphoserine: S353 and S356. Positions 362–371 (VKKEPEDRQQ) are enriched in basic and acidic residues. K363 participates in a covalent cross-link: Glycyl lysine isopeptide (Lys-Gly) (interchain with G-Cter in SUMO2). The residue at position 375 (S375) is a Phosphoserine. Composition is skewed to basic residues over residues 383–419 (DSKR…RRSR), 439–453 (RRHH…KAKH), 461–477 (SNRH…RSQS), and 487–499 (KKHR…HRDR). The tract at residues 391–433 (RSASRSRSRTRSRSRSHTPRRHYNNRRSRSGTYSSRSRSRSRS) is RS. S446 is modified (phosphoserine). Over residues 500–509 (RERSRSFERS) the composition is skewed to basic and acidic residues. Basic residues predominate over residues 510–527 (HKGKHHGGSRSGHGRHRR).

It belongs to the cyclin family. Cyclin L subfamily. As to quaternary structure, interacts with POLR2A via its hyperphosphorylated C-terminal domain (CTD). Interacts with CDK11A, CDK11B, CDK12 and CDK13. May form a ternary complex with CDK11B and casein kinase II (CKII). Interacts with pre-mRNA-splicing factors, including at least SRSF1, SRSF2 AND SRSF7/SLU7. In terms of tissue distribution, ubiquitous with higher level in liver; expressed in striatal neurons.

It localises to the nucleus speckle. The protein resides in the nucleus. The protein localises to the nucleoplasm. In terms of biological role, involved in pre-mRNA splicing. Functions in association with cyclin-dependent kinases (CDKs). May play a role in the regulation of RNA polymerase II (pol II). Inhibited by the CDK-specific inhibitor CDKN1A/p21. The protein is Cyclin-L1 (Ccnl1) of Rattus norvegicus (Rat).